The following is a 644-amino-acid chain: Exoribonuclease 2 (644 aa).

The RNB domain occupies 189 to 516 (RQDLTALNFV…NHRLLKAVIK (328 aa)). Residues 561–643 (NTRFAAEIID…ETRSIIARPA (83 aa)) form the S1 motif domain.

This sequence belongs to the RNR ribonuclease family. RNase II subfamily.

It localises to the cytoplasm. It catalyses the reaction Exonucleolytic cleavage in the 3'- to 5'-direction to yield nucleoside 5'-phosphates.. Functionally, involved in mRNA degradation. Hydrolyzes single-stranded polyribonucleotides processively in the 3' to 5' direction. The polypeptide is Exoribonuclease 2 (Salmonella typhi).